The sequence spans 528 residues: FAD-dependent monooxygenase DEP2 (528 aa).

The N-terminal stretch at 1–23 (MEDGRSTFKVIIIGAGVTGLTLA) is a signal peptide. FAD-binding residues include Asp-37, Arg-110, Asp-311, and Gly-324. A helical transmembrane segment spans residues 479 to 499 (VFPQILGVLMVMWSSVWLFHL). Residue Asn-521 is glycosylated (N-linked (GlcNAc...) asparagine).

This sequence belongs to the paxM FAD-dependent monooxygenase family. Requires FAD as cofactor.

Its subcellular location is the membrane. It functions in the pathway polyketide biosynthesis. In terms of biological role, FAD-dependent monooxygenase; part of the gene cluster that mediates the biosynthesis of depudecin, a highly oxidized eleven-carbon linear polyketide that acts as a histone deacetylase (HDAC) inhibitor and makes a small contribution to pathogenesis. The reducing polyketide synthase DEP5 is the central enzyme in depudecin biosynthesis by yielding the backbone polyketide chain. The monooxygenases DEP2 and DEP4, as well as the uncharacterized protein DEP1, then act as tailoring enzymes to modify the intermediate polyketide chain into depudecin. This chain is FAD-dependent monooxygenase DEP2, found in Alternaria brassicicola (Dark leaf spot agent).